The primary structure comprises 121 residues: Large ribosomal subunit protein uL14 (121 aa).

Belongs to the universal ribosomal protein uL14 family. In terms of assembly, part of the 50S ribosomal subunit. Forms a cluster with proteins L3 and L19. In the 70S ribosome, L14 and L19 interact and together make contacts with the 16S rRNA in bridges B5 and B8.

In terms of biological role, binds to 23S rRNA. Forms part of two intersubunit bridges in the 70S ribosome. This Hydrogenobaculum sp. (strain Y04AAS1) protein is Large ribosomal subunit protein uL14.